The primary structure comprises 239 residues: Ribosomal RNA small subunit methyltransferase G (239 aa).

S-adenosyl-L-methionine contacts are provided by residues G78, F83, 129–130 (AE), and R148.

The protein belongs to the methyltransferase superfamily. RNA methyltransferase RsmG family.

It localises to the cytoplasm. In terms of biological role, specifically methylates the N7 position of a guanine in 16S rRNA. This Clostridium botulinum (strain Okra / Type B1) protein is Ribosomal RNA small subunit methyltransferase G.